The primary structure comprises 491 residues: Glutamyl-tRNA(Gln) amidotransferase subunit A (491 aa).

Residues lysine 76 and serine 154 each act as charge relay system in the active site. Serine 178 acts as the Acyl-ester intermediate in catalysis.

This sequence belongs to the amidase family. GatA subfamily. In terms of assembly, heterotrimer of A, B and C subunits.

The enzyme catalyses L-glutamyl-tRNA(Gln) + L-glutamine + ATP + H2O = L-glutaminyl-tRNA(Gln) + L-glutamate + ADP + phosphate + H(+). Its function is as follows. Allows the formation of correctly charged Gln-tRNA(Gln) through the transamidation of misacylated Glu-tRNA(Gln) in organisms which lack glutaminyl-tRNA synthetase. The reaction takes place in the presence of glutamine and ATP through an activated gamma-phospho-Glu-tRNA(Gln). This is Glutamyl-tRNA(Gln) amidotransferase subunit A from Cereibacter sphaeroides (strain ATCC 17025 / ATH 2.4.3) (Rhodobacter sphaeroides).